Here is an 89-residue protein sequence, read N- to C-terminus: MALTQERKNEIIKAYARHEGDTGSAEVQIAVLTADINELNTHMAAHKHDFHSQRGLMKKIGSRRNLLRYLRNTDIQRYRELIQRLGLRR.

Belongs to the universal ribosomal protein uS15 family. Part of the 30S ribosomal subunit. Forms a bridge to the 50S subunit in the 70S ribosome, contacting the 23S rRNA.

In terms of biological role, one of the primary rRNA binding proteins, it binds directly to 16S rRNA where it helps nucleate assembly of the platform of the 30S subunit by binding and bridging several RNA helices of the 16S rRNA. Forms an intersubunit bridge (bridge B4) with the 23S rRNA of the 50S subunit in the ribosome. This is Small ribosomal subunit protein uS15 from Leuconostoc mesenteroides subsp. mesenteroides (strain ATCC 8293 / DSM 20343 / BCRC 11652 / CCM 1803 / JCM 6124 / NCDO 523 / NBRC 100496 / NCIMB 8023 / NCTC 12954 / NRRL B-1118 / 37Y).